Reading from the N-terminus, the 557-residue chain is Potassium-transporting ATPase potassium-binding subunit (557 aa).

The next 12 membrane-spanning stretches (helical) occupy residues 5-25 (GFLL…PLGS), 63-83 (LCAI…MLLG), 132-152 (GLTV…FALI), 170-190 (LLRI…LFFI), 253-273 (FVQM…FGEV), 283-303 (LLWA…WAEV), 329-349 (VLVS…AVIA), 356-376 (ALGG…FGGV), 379-399 (GLYG…LMIG), 416-436 (LTAL…ALAM), 484-504 (LLAF…MAIA), and 526-546 (LFVG…FIPA).

The protein belongs to the KdpA family. The system is composed of three essential subunits: KdpA, KdpB and KdpC.

It is found in the cell inner membrane. Part of the high-affinity ATP-driven potassium transport (or Kdp) system, which catalyzes the hydrolysis of ATP coupled with the electrogenic transport of potassium into the cytoplasm. This subunit binds the periplasmic potassium ions and delivers the ions to the membrane domain of KdpB through an intramembrane tunnel. The chain is Potassium-transporting ATPase potassium-binding subunit from Escherichia coli O17:K52:H18 (strain UMN026 / ExPEC).